The following is a 114-amino-acid chain: Iron-sulfur cluster insertion protein ErpA (114 aa).

3 residues coordinate iron-sulfur cluster: Cys42, Cys106, and Cys108.

Belongs to the HesB/IscA family. Homodimer. Iron-sulfur cluster serves as cofactor.

Required for insertion of 4Fe-4S clusters for at least IspG. This Pseudoalteromonas atlantica (strain T6c / ATCC BAA-1087) protein is Iron-sulfur cluster insertion protein ErpA.